The sequence spans 101 residues: Small ribosomal subunit protein uS10 (101 aa).

This sequence belongs to the universal ribosomal protein uS10 family. As to quaternary structure, part of the 30S ribosomal subunit.

In terms of biological role, involved in the binding of tRNA to the ribosomes. This Ureaplasma parvum serovar 3 (strain ATCC 27815 / 27 / NCTC 11736) protein is Small ribosomal subunit protein uS10.